The sequence spans 634 residues: Pescadillo homolog (634 aa).

The BRCT domain maps to 321–414; it reads RLRTLFKGLK…QLLPTNKYFM (94 aa). Disordered stretches follow at residues 437–473, 491–561, and 603–634; these read EEKALHDPSLIETHVQSDDDDDDSDAEADNQEEEEIE, EYKK…RKAE, and NIDADAKEAKKTAKREAKKAAAEAAAKALKMA. Ser453 is subject to Phosphoserine. Composition is skewed to acidic residues over residues 454–473 and 501–527; these read DDDDDDSDAEADNQEEEEIE and VNEDEEDSVDDDDEEDEEEEEEEDVEQ. 2 coiled-coil regions span residues 460 to 546 and 596 to 629; these read SDAE…KVES and LLRKKRRNIDADAKEAKKTAKREAKKAAAEAAAK. Basic and acidic residues-rich tracts occupy residues 528–548 and 603–623; these read LDDKTKRLLEEKQKMKVESGK and NIDADAKEAKKTAKREAKKAA. Positions 624-634 are enriched in low complexity; the sequence is AEAAAKALKMA.

Belongs to the pescadillo family.

The protein resides in the nucleus. The protein localises to the nucleolus. It is found in the nucleoplasm. In terms of biological role, required for maturation of ribosomal RNAs and formation of the large ribosomal subunit. The chain is Pescadillo homolog from Drosophila willistoni (Fruit fly).